The following is a 341-amino-acid chain: MPDGFASHEERAAFIAGLPKAELHLHIEGSLEPELLFEFARRNRVAIPFASIDDVRAAYAFTNLQDFLDIYYQGMGVLHTEQDFFDLTAAYCARANADSVRHIEIFFDPQGHTARGVAFETVITGITRALDDAEARYGITSKLILCFLRHLSEAEAEATLDEALPFLGRIAGVGLDSSEVGHPPAKFERVFARARSLGLKTVAHAGEEGPPEYVREALDLLKVDRIDHGNRSLEDPALVARLAASDMTLTVCPLSNLKLCVVDDIADHPLKIMLDADLKATVNSDDPSYFGGYVNANYQAVADALDLSRDDLVTLARNSFTGSFLSDAEKARHLAAIDAYA.

3 residues coordinate Zn(2+): histidine 24, histidine 26, and histidine 204. The active-site Proton donor is the glutamate 207. Aspartate 285 is a binding site for Zn(2+). Aspartate 286 serves as a coordination point for substrate.

The protein belongs to the metallo-dependent hydrolases superfamily. Adenosine and AMP deaminases family. Adenine deaminase type 2 subfamily. It depends on Zn(2+) as a cofactor.

The catalysed reaction is adenine + H2O + H(+) = hypoxanthine + NH4(+). In terms of biological role, catalyzes the hydrolytic deamination of adenine to hypoxanthine. Plays an important role in the purine salvage pathway and in nitrogen catabolism. In Sphingopyxis alaskensis (strain DSM 13593 / LMG 18877 / RB2256) (Sphingomonas alaskensis), this protein is Adenine deaminase.